We begin with the raw amino-acid sequence, 404 residues long: Sorting nexin-5 (404 aa).

N-acetylalanine is present on alanine 2. A PX domain is found at 25-172 (LNVDPSLQID…HVFLEYDQDL (148 aa)). A 1,2-diacyl-sn-glycero-3-phospho-(1D-myo-inositol-4,5-bisphosphate) contacts are provided by residues 40-46 (SERDKVK), 99-105 (FDGPREK), and 113-116 (EGSM). The interval 169–261 (DQDLSVRRKN…HSLALEEPTV (93 aa)) is interaction with DOCK1. Positions 183 to 200 (FGGFFKSVVKSADEVLFS) are membrane-binding amphipathic helix. Residue serine 193 is modified to Phosphoserine. The BAR domain maps to 202-404 (VKEVDDFFEQ…QSCIDLFKNN (203 aa)). An N6-acetyllysine modification is found at lysine 275.

It belongs to the sorting nexin family. As to quaternary structure, forms heterodimers with BAR domain-containing sorting nexins SNX1 and SNX2; does not homodimerize. The heterodimers are proposed to self-assemble into helical arrays on the membrane to stabilize and expand local membrane curvature underlying endosomal tubule formation. Thought to be a component of the originally described retromer complex (also called SNX-BAR retromer) which is a pentamer containing the heterotrimeric retromer cargo-selective complex (CSC), also described as vacuolar protein sorting subcomplex (VPS), and a heterodimeric membrane-deforming subcomplex formed between SNX1 or SNX2 and SNX5 or SNX6 (also called SNX-BAR subcomplex); the respective CSC and SNX-BAR subcomplexes associate with low affinity. Interacts with SNX1, SNX2, VPS26A, VPS29, VPS35, DCTN1, DOCK1, MIB1, PIP5K1C. Interacts with HGS; increased by PIP5K1C kinase activity and by PtdIns(3P) and/or PtdIns(3,4)P2.

The protein localises to the endosome. The protein resides in the early endosome. It is found in the early endosome membrane. Its subcellular location is the cell membrane. It localises to the cytoplasmic vesicle membrane. The protein localises to the cytoplasm. The protein resides in the cell projection. It is found in the phagocytic cup. Its subcellular location is the ruffle. In terms of biological role, involved in several stages of intracellular trafficking. Interacts with membranes containing phosphatidylinositol lipids. Acts in part as component of the retromer membrane-deforming SNX-BAR subcomplex. The SNX-BAR retromer mediates retrograde transport of cargo proteins from endosomes to the trans-Golgi network (TGN) and is involved in endosome-to-plasma membrane transport for cargo protein recycling. The SNX-BAR subcomplex functions to deform the donor membrane into a tubular profile called endosome-to-TGN transport carrier (ETC). Does not have in vitro vesicle-to-membrane remodeling activity. Involved in retrograde transport of lysosomal enzyme receptor IGF2R. May function as link between endosomal transport vesicles and dynactin. Plays a role in the internalization of EGFR after EGF stimulation. Involved in EGFR endosomal sorting and degradation; the function involves PIP5K1C and is retromer-independent. Together with PIP5K1C facilitates HGS interaction with ubiquitinated EGFR, which initiates EGFR sorting to intraluminal vesicles (ILVs) of the multivesicular body for subsequent lysosomal degradation. Involved in E-cadherin sorting and degradation; inhibits PIP5K1C-mediated E-cadherin degradation. Plays a role in macropinocytosis. The chain is Sorting nexin-5 (SNX5) from Bos taurus (Bovine).